Here is a 234-residue protein sequence, read N- to C-terminus: ATP-dependent dethiobiotin synthetase BioD (234 aa).

An ATP-binding site is contributed by 12–17 (DVGKTF). Position 16 (Thr-16) interacts with Mg(2+). Lys-37 is a catalytic residue. Thr-41 lines the substrate pocket. Residues Asp-54 and 115–118 (EGAG) each bind ATP. Mg(2+)-binding residues include Asp-54 and Glu-115.

This sequence belongs to the dethiobiotin synthetase family. Homodimer. Mg(2+) serves as cofactor.

The protein resides in the cytoplasm. The catalysed reaction is (7R,8S)-7,8-diammoniononanoate + CO2 + ATP = (4R,5S)-dethiobiotin + ADP + phosphate + 3 H(+). It functions in the pathway cofactor biosynthesis; biotin biosynthesis; biotin from 7,8-diaminononanoate: step 1/2. Its function is as follows. Catalyzes a mechanistically unusual reaction, the ATP-dependent insertion of CO2 between the N7 and N8 nitrogen atoms of 7,8-diaminopelargonic acid (DAPA, also called 7,8-diammoniononanoate) to form a ureido ring. In Lysinibacillus sphaericus (Bacillus sphaericus), this protein is ATP-dependent dethiobiotin synthetase BioD.